A 455-amino-acid polypeptide reads, in one-letter code: Chromosomal replication initiator protein DnaA (455 aa).

Residues 1–70 (MTNETWVQVR…RMRLTEAGSP (70 aa)) are domain I, interacts with DnaA modulators. A domain II region spans residues 70-113 (PVERLEFAVSNTPRAPLKEVKAAAPAASPARARPAPPEEDLRGA). The segment at 87–109 (KEVKAAAPAASPARARPAPPEED) is disordered. A compositionally biased stretch (low complexity) spans 91 to 102 (AAAPAASPARAR). Residues 114 to 335 (PLDARFTFDS…GALTRLFAFA (222 aa)) form a domain III, AAA+ region region. Residues glycine 158, glycine 160, lysine 161, and threonine 162 each contribute to the ATP site. Residues 336–455 (SLVGREITLD…LQLLRRLLQA (120 aa)) are domain IV, binds dsDNA.

This sequence belongs to the DnaA family. As to quaternary structure, oligomerizes as a right-handed, spiral filament on DNA at oriC.

The protein localises to the cytoplasm. Plays an essential role in the initiation and regulation of chromosomal replication. ATP-DnaA binds to the origin of replication (oriC) to initiate formation of the DNA replication initiation complex once per cell cycle. Binds the DnaA box (a 9 base pair repeat at the origin) and separates the double-stranded (ds)DNA. Forms a right-handed helical filament on oriC DNA; dsDNA binds to the exterior of the filament while single-stranded (ss)DNA is stabiized in the filament's interior. The ATP-DnaA-oriC complex binds and stabilizes one strand of the AT-rich DNA unwinding element (DUE), permitting loading of DNA polymerase. After initiation quickly degrades to an ADP-DnaA complex that is not apt for DNA replication. Binds acidic phospholipids. In Cereibacter sphaeroides (strain ATCC 17029 / ATH 2.4.9) (Rhodobacter sphaeroides), this protein is Chromosomal replication initiator protein DnaA.